Consider the following 239-residue polypeptide: Small ribosomal subunit protein eS1 (239 aa).

The segment at 1 to 24 (MAIQPPGSYPQGNKKGKAKKKSGQ) is disordered.

It belongs to the eukaryotic ribosomal protein eS1 family. As to quaternary structure, component of the small ribosomal subunit. Mature ribosomes consist of a small (40S) and a large (60S) subunit. The 40S subunit contains about 33 different proteins and 1 molecule of RNA (18S). The 60S subunit contains about 49 different proteins and 3 molecules of RNA (25S, 5.8S and 5S).

The protein resides in the cytoplasm. This Encephalitozoon cuniculi (strain GB-M1) (Microsporidian parasite) protein is Small ribosomal subunit protein eS1.